Consider the following 124-residue polypeptide: uncharacterized protein (124 aa).

This is an uncharacterized protein from Acanthamoeba polyphaga (Amoeba).